Here is a 531-residue protein sequence, read N- to C-terminus: 2,3-bisphosphoglycerate-independent phosphoglycerate mutase (531 aa).

Mn(2+) contacts are provided by aspartate 13 and serine 63. Serine 63 acts as the Phosphoserine intermediate in catalysis. Residues histidine 124, 154–155, arginine 187, arginine 193, 261–264, and lysine 342 contribute to the substrate site; these read RD and RPDR. Positions 420, 424, 462, 463, and 480 each coordinate Mn(2+).

It belongs to the BPG-independent phosphoglycerate mutase family. In terms of assembly, monomer. Requires Mn(2+) as cofactor.

The enzyme catalyses (2R)-2-phosphoglycerate = (2R)-3-phosphoglycerate. The protein operates within carbohydrate degradation; glycolysis; pyruvate from D-glyceraldehyde 3-phosphate: step 3/5. Catalyzes the interconversion of 2-phosphoglycerate and 3-phosphoglycerate. In Mycoplasma mycoides subsp. mycoides SC (strain CCUG 32753 / NCTC 10114 / PG1), this protein is 2,3-bisphosphoglycerate-independent phosphoglycerate mutase.